Consider the following 368-residue polypeptide: tRNA 2-selenouridine synthase (368 aa).

Positions 15 to 138 (FLNQHPIMDV…LRQYLIGVIE (124 aa)) constitute a Rhodanese domain. Residue C98 is the S-selanylcysteine intermediate of the active site.

Belongs to the SelU family. In terms of assembly, monomer.

The enzyme catalyses 5-methylaminomethyl-2-thiouridine(34) in tRNA + selenophosphate + (2E)-geranyl diphosphate + H2O + H(+) = 5-methylaminomethyl-2-selenouridine(34) in tRNA + (2E)-thiogeraniol + phosphate + diphosphate. It catalyses the reaction 5-methylaminomethyl-2-thiouridine(34) in tRNA + (2E)-geranyl diphosphate = 5-methylaminomethyl-S-(2E)-geranyl-thiouridine(34) in tRNA + diphosphate. The catalysed reaction is 5-methylaminomethyl-S-(2E)-geranyl-thiouridine(34) in tRNA + selenophosphate + H(+) = 5-methylaminomethyl-2-(Se-phospho)selenouridine(34) in tRNA + (2E)-thiogeraniol. It carries out the reaction 5-methylaminomethyl-2-(Se-phospho)selenouridine(34) in tRNA + H2O = 5-methylaminomethyl-2-selenouridine(34) in tRNA + phosphate. Involved in the post-transcriptional modification of the uridine at the wobble position (U34) of tRNA(Lys), tRNA(Glu) and tRNA(Gln). Catalyzes the conversion of 2-thiouridine (S2U-RNA) to 2-selenouridine (Se2U-RNA). Acts in a two-step process involving geranylation of 2-thiouridine (S2U) to S-geranyl-2-thiouridine (geS2U) and subsequent selenation of the latter derivative to 2-selenouridine (Se2U) in the tRNA chain. The polypeptide is tRNA 2-selenouridine synthase (Shewanella baltica (strain OS223)).